The sequence spans 165 residues: Bacterial non-heme ferritin (165 aa).

Residues 1-145 form the Ferritin-like diiron domain; it reads MLKPEMIEKL…SIIDKLSLAG (145 aa). Fe cation is bound by residues Glu-17, Glu-49, Glu-50, His-53, Glu-94, Glu-126, Gln-127, and Glu-130.

The protein belongs to the ferritin family. Prokaryotic subfamily. Homooligomer of 24 subunits that assemble into a spherical protein shell (12 +/- 1 nM diameter) that can sequester at least 2000 iron atoms.

The protein localises to the cytoplasm. The catalysed reaction is 4 Fe(2+) + O2 + 6 H2O = 4 iron(III) oxide-hydroxide + 12 H(+). In terms of biological role, iron-storage protein. This chain is Bacterial non-heme ferritin (ftnA), found in Escherichia coli O157:H7.